The chain runs to 105 residues: Acylphosphatase (105 aa).

The Acylphosphatase-like domain occupies 16–105 (RLTAWVRGRV…RGGYSGFTQA (90 aa)). Catalysis depends on residues Arg-31 and Asn-49.

Belongs to the acylphosphatase family.

The catalysed reaction is an acyl phosphate + H2O = a carboxylate + phosphate + H(+). This is Acylphosphatase (acyP) from Acidothermus cellulolyticus (strain ATCC 43068 / DSM 8971 / 11B).